Consider the following 200-residue polypeptide: Blue fluorescence protein (200 aa).

Lumazine-binding repeat units follow at residues 1-111 (MFKG…TGGR) and 112-200 (SLSG…AGNW).

As to quaternary structure, monomer.

Its subcellular location is the cytoplasm. Its function is as follows. Blue fluorescence protein (BFP) that can bind 6,7-dimethyl-8-ribityllumazine, riboflavin, and 6-methyl-7-oxo-8-ribityllumazine as a bound fluorophore. Has no riboflavin-synthase activity. The chain is Blue fluorescence protein from Aliivibrio fischeri (Vibrio fischeri).